Reading from the N-terminus, the 614-residue chain is Cathepsin F (614 aa).

The first 20 residues, 1-20, serve as a signal peptide directing secretion; it reads MRLFAAATVALVLLLGQAAG. The propeptide at 21–393 is activation peptide; it reads EELAEERAGQ…AAVVPAYHGE (373 aa). The disordered stretch occupies residues 25–50; the sequence is EERAGQAQGDAESTESSETTTDQAVS. Residues 29 to 45 show a composition bias toward low complexity; it reads GQAQGDAESTESSETTT. Asn151 carries an N-linked (GlcNAc...) asparagine glycan. 2 disulfide bridges follow: Cys415–Cys456 and Cys449–Cys489. Residue Cys418 is part of the active site. N-linked (GlcNAc...) asparagine glycosylation is found at Asn492 and Asn510. A disulfide bond links Cys548 and Cys602. Residues His555 and Asn581 contribute to the active site.

It belongs to the peptidase C1 family.

The enzyme catalyses The recombinant enzyme cleaves synthetic substrates with Phe and Leu (better than Val) in P2, with high specificity constant (kcat/Km) comparable to that of cathepsin L.. May have a role in autophagic cell death. In Drosophila melanogaster (Fruit fly), this protein is Cathepsin F.